A 708-amino-acid polypeptide reads, in one-letter code: Leukotoxin translocation ATP-binding protein LktB (708 aa).

A Peptidase C39 domain is found at 1 to 126 (MEANHQRNDL…ACYQGQLILV (126 aa)). Residues 155 to 437 (FLETLIVSIF…LAQLWQDFQQ (283 aa)) enclose the ABC transmembrane type-1 domain. 5 helical membrane-spanning segments follow: residues 159–179 (LIVS…FQVV), 192–212 (LNII…LSGL), 270–290 (ALTS…MWYY), 296–316 (LVIL…SPIL), and 389–409 (VMVI…LSIG). The 236-residue stretch at 469–704 (ISFKNIRFRY…SNGLYSYLHQ (236 aa)) folds into the ABC transporter domain. Residue 503–510 (GRSGSGKS) coordinates ATP.

This sequence belongs to the ABC transporter superfamily. Protein-1 exporter (TC 3.A.1.109) family. As to quaternary structure, homodimer.

The protein resides in the cell inner membrane. The catalysed reaction is ATP + H2O + proteinSide 1 = ADP + phosphate + proteinSide 2.. Part of the ABC transporter complex LktBD involved in leukotoxin export. Transmembrane domains (TMD) form a pore in the inner membrane and the ATP-binding domain (NBD) is responsible for energy generation. This is Leukotoxin translocation ATP-binding protein LktB (lktB) from Mannheimia haemolytica (Pasteurella haemolytica).